The sequence spans 605 residues: Translation factor GUF1 homolog, chloroplastic (605 aa).

The region spanning 7–189 (RRIRNFSIIA…RIVQVVPPPR (183 aa)) is the tr-type G domain. Residues 16 to 23 (AHIDHGKS), 82 to 86 (DTPGH), and 136 to 139 (NKID) each bind GTP.

The protein belongs to the TRAFAC class translation factor GTPase superfamily. Classic translation factor GTPase family. LepA subfamily.

The protein resides in the plastid. Its subcellular location is the chloroplast. It carries out the reaction GTP + H2O = GDP + phosphate + H(+). In terms of biological role, promotes chloroplast protein synthesis. May act as a fidelity factor of the translation reaction, by catalyzing a one-codon backward translocation of tRNAs on improperly translocated ribosomes. This is Translation factor GUF1 homolog, chloroplastic from Ostreococcus lucimarinus (strain CCE9901).